Reading from the N-terminus, the 144-residue chain is 3-dehydroquinate dehydratase (144 aa).

Tyr22 functions as the Proton acceptor in the catalytic mechanism. 3 residues coordinate substrate: Asn73, His79, and Asp86. His99 acts as the Proton donor in catalysis. Residues 100 to 101 (LS) and Arg110 each bind substrate.

It belongs to the type-II 3-dehydroquinase family. Homododecamer.

The catalysed reaction is 3-dehydroquinate = 3-dehydroshikimate + H2O. The protein operates within metabolic intermediate biosynthesis; chorismate biosynthesis; chorismate from D-erythrose 4-phosphate and phosphoenolpyruvate: step 3/7. Catalyzes a trans-dehydration via an enolate intermediate. The sequence is that of 3-dehydroquinate dehydratase from Geotalea daltonii (strain DSM 22248 / JCM 15807 / FRC-32) (Geobacter daltonii).